The following is a 344-amino-acid chain: Phosphoserine phosphatase (344 aa).

An ACT domain is found at 48-120 (VVTILGKDRV…ERLGLDIVMQ (73 aa)). Aspartate 135 serves as the catalytic Nucleophile. Mg(2+) contacts are provided by aspartate 135 and aspartate 137. Aspartate 137 (proton donor) is an active-site residue. Substrate-binding positions include glutamate 144, arginine 180, 223–224 (SG), and lysine 268. Aspartate 291 contacts Mg(2+).

This sequence belongs to the HAD-like hydrolase superfamily. SerB family. The cofactor is Mg(2+).

It catalyses the reaction O-phospho-L-serine + H2O = L-serine + phosphate. It carries out the reaction O-phospho-D-serine + H2O = D-serine + phosphate. It participates in amino-acid biosynthesis; L-serine biosynthesis; L-serine from 3-phospho-D-glycerate: step 3/3. The chain is Phosphoserine phosphatase from Archaeoglobus fulgidus (strain ATCC 49558 / DSM 4304 / JCM 9628 / NBRC 100126 / VC-16).